The sequence spans 150 residues: Large ribosomal subunit protein bL9 (150 aa).

The protein belongs to the bacterial ribosomal protein bL9 family.

Functionally, binds to the 23S rRNA. This Idiomarina loihiensis (strain ATCC BAA-735 / DSM 15497 / L2-TR) protein is Large ribosomal subunit protein bL9.